We begin with the raw amino-acid sequence, 252 residues long: Chitooligosaccharide deacetylase (252 aa).

His61 and His125 together coordinate Mg(2+).

This sequence belongs to the YdjC deacetylase family. ChbG subfamily. As to quaternary structure, homodimer. It depends on Mg(2+) as a cofactor.

The protein localises to the cytoplasm. The catalysed reaction is N,N'-diacetylchitobiose + H2O = N-acetyl-beta-D-glucosaminyl-(1-&gt;4)-D-glucosamine + acetate. It carries out the reaction diacetylchitobiose-6'-phosphate + H2O = N'-monoacetylchitobiose-6'-phosphate + acetate. It participates in glycan degradation; chitin degradation. Involved in the degradation of chitin. ChbG is essential for growth on the acetylated chitooligosaccharides chitobiose and chitotriose but is dispensable for growth on cellobiose and chitosan dimer, the deacetylated form of chitobiose. Deacetylation of chitobiose-6-P and chitotriose-6-P is necessary for both the activation of the chb promoter by the regulatory protein ChbR and the hydrolysis of phosphorylated beta-glucosides by the phospho-beta-glucosidase ChbF. Catalyzes the removal of only one acetyl group from chitobiose-6-P to yield monoacetylchitobiose-6-P, the inducer of ChbR and the substrate of ChbF. This chain is Chitooligosaccharide deacetylase, found in Salmonella schwarzengrund (strain CVM19633).